Here is a 614-residue protein sequence, read N- to C-terminus: Autophagy-related protein 22-1 (614 aa).

Positions 1 to 29 are disordered; sequence MQNCTNSPEDQAASVCPPPPQFPGDDTRP. N-linked (GlcNAc...) asparagine glycosylation occurs at N3. 4 helical membrane-spanning segments follow: residues 41-61, 126-146, 160-180, and 185-205; these read YGWAAEVFTVCAMGSFLPITL, TASFAMYTFSLSVFIQAILII, MLLVIFALIGSVSTMLFLAVV, and LLGGLFAIISNTCFGASFVLL. Residues 229-254 form a disordered region; it reads PTGTSHDSTSTADGPGQTDGTETTSL. Residues 230–254 show a composition bias toward polar residues; it reads TGTSHDSTSTADGPGQTDGTETTSL. 8 helical membrane passes run 291 to 311, 322 to 342, 383 to 403, 417 to 437, 452 to 472, 486 to 506, 523 to 545, and 554 to 574; these read GIGIGYIGAVILQAICILVVV, LVLFLIGLWWFTFTIPAAMWL, ILLFLAAWFLLSDGIATVSGT, AALGLINVIAMIAGVFGAFSW, IVACIILFELVPLYGLLGFIP, WEMYPLGVIYGLVMGGLSSYC, YALYAITDKGSSVFGPAIVGIIT, and AFVFLAVLILLPLPLMLLVDV.

Belongs to the ATG22 family.

Its subcellular location is the vacuole membrane. Functionally, vacuolar effluxer which mediate the efflux of amino acids resulting from autophagic degradation. The release of autophagic amino acids allows the maintenance of protein synthesis and viability during nitrogen starvation. The chain is Autophagy-related protein 22-1 (atg22-1) from Aspergillus niger (strain ATCC MYA-4892 / CBS 513.88 / FGSC A1513).